A 550-amino-acid chain; its full sequence is Ribosomal protein S6 kinase beta (550 aa).

The 262-residue stretch at 83–344 (FQLLKVLGKG…AEEIKSHAFF (262 aa)) folds into the Protein kinase domain. Residues 89 to 97 (LGKGGYGKV) and Lys-115 each bind ATP. Asp-210 functions as the Proton acceptor in the catalytic mechanism. Residues 345–415 (KTTDWNLVYA…VAPSVLEMMN (71 aa)) form the AGC-kinase C-terminal domain. Residue Thr-404 is modified to Phosphothreonine. Disordered regions lie at residues 433-466 (RAGA…GPNS) and 484-550 (TAGG…KRVM). Ser-439 carries the post-translational modification Phosphoserine. Over residues 520–534 (TTTGNGSTTTTRPSN) the composition is skewed to low complexity.

The protein belongs to the protein kinase superfamily. AGC Ser/Thr protein kinase family. S6 kinase subfamily. It depends on Mg(2+) as a cofactor. Post-translationally, may be phosphorylated on Thr-404 by let-363/TOR.

It is found in the cell projection. It localises to the axon. Its subcellular location is the perikaryon. The enzyme catalyses L-seryl-[protein] + ATP = O-phospho-L-seryl-[protein] + ADP + H(+). It carries out the reaction L-threonyl-[protein] + ATP = O-phospho-L-threonyl-[protein] + ADP + H(+). In terms of biological role, serine/threonine-protein kinase which regulates mRNA translation. Negatively regulates lifespan and resistance to starvation, oxidative stress, protein aggregation and P.aeruginosa-mediated infection. May regulate these processes by preventing the activation of transcription factor hif-1. Required, probably downstream of let-363/TOR, for the establishment of the proper number of germline progenitors by promoting cell cycle progression and preventing differentiation during larval development. Regulates germ cell size. In addition required for sperm production and embryo viability. Involved in axon regeneration of PLM and ALM neurons by inhibiting growth cone formation early after axotomy and later by inhibiting axon extension. Functions in axon regeneration and lifespan probably by preventing aak-2/AMPK activation. Negatively regulates autophagy. The chain is Ribosomal protein S6 kinase beta from Caenorhabditis elegans.